Reading from the N-terminus, the 1030-residue chain is MMS19 nucleotide excision repair protein homolog (1030 aa).

N-acetylalanine is present on A2. The residue at position 496 (K496) is an N6-acetyllysine. 4 HEAT repeats span residues Q866 to K904, L908 to Q946, S949 to P987, and L990 to P1028. S1027 is modified (phosphoserine).

It belongs to the MET18/MMS19 family. In terms of assembly, component of the CIA complex. In the CIA complex, interacts directly with CIAO2B and CIAO3. Component of the MMXD complex, composed of CIAO1, ERCC2, CIAO2B, MMS19 and SLC25A5. Interacts with CIAO2B; the interaction is direct. Interacts with ERCC2/XPD; the interaction is direct. Interacts with ERCC3/XPB and NCOA3/RAC3. Interacts with RTEL1; the interaction mediates the association of RTEL1 with the CIA complex. Interacts with BRIP1. Interacts with KIF4A; the interaction facilitates the transfer of Fe-S clusters to KIF4A to ensure proper localization of KIF4A to the mitotic machinery components. Interacts with CCDC117; the interaction is indirect. In terms of processing, ubiquitinated; undergoes 'Lys-48'-linked polyubiquitination by MAGEF1-NSMCE1 ubiquitin ligase complex leading to proteasomal degradation. In terms of tissue distribution, ubiquitously expressed with higher expression in testis.

The protein resides in the nucleus. Its subcellular location is the cytoplasm. It localises to the cytoskeleton. The protein localises to the spindle. It is found in the microtubule organizing center. The protein resides in the centrosome. In terms of biological role, key component of the cytosolic iron-sulfur protein assembly (CIA) complex, a multiprotein complex that mediates the incorporation of iron-sulfur cluster into apoproteins specifically involved in DNA metabolism and genomic integrity. In the CIA complex, MMS19 acts as an adapter between early-acting CIA components and a subset of cellular target iron-sulfur proteins such as ERCC2/XPD, FANCJ and RTEL1, thereby playing a key role in nucleotide excision repair (NER), homologous recombination-mediated double-strand break DNA repair, DNA replication and RNA polymerase II (POL II) transcription. As part of the mitotic spindle-associated MMXD complex, plays a role in chromosome segregation, probably by facilitating iron-sulfur (Fe-S) cluster assembly into ERCC2/XPD. Together with CIAO2, facilitates the transfer of Fe-S clusters to the motor protein KIF4A, which ensures proper localization of KIF4A to mitotic machinery components to promote the progression of mitosis. Indirectly acts as a transcriptional coactivator of estrogen receptor (ER), via its role in iron-sulfur insertion into some component of the TFIIH-machinery. This chain is MMS19 nucleotide excision repair protein homolog, found in Homo sapiens (Human).